We begin with the raw amino-acid sequence, 1222 residues long: ATP-dependent helicase/nuclease subunit A (1222 aa).

The UvrD-like helicase ATP-binding domain maps to 39–495; the sequence is QKRTAQQIEA…ILLKENFRSQ (457 aa). Position 60–67 (60–67) interacts with ATP; it reads ASAGSGKT. Positions 524-810 constitute a UvrD-like helicase C-terminal domain; that stretch reads QLIAGSHAQT…NLMTIHKSKG (287 aa).

This sequence belongs to the helicase family. AddA subfamily. Heterodimer of AddA and AddB/RexB. Requires Mg(2+) as cofactor.

The enzyme catalyses Couples ATP hydrolysis with the unwinding of duplex DNA by translocating in the 3'-5' direction.. The catalysed reaction is ATP + H2O = ADP + phosphate + H(+). The heterodimer acts as both an ATP-dependent DNA helicase and an ATP-dependent, dual-direction single-stranded exonuclease. Recognizes the chi site generating a DNA molecule suitable for the initiation of homologous recombination. The AddA nuclease domain is required for chi fragment generation; this subunit has the helicase and 3' -&gt; 5' nuclease activities. This Streptococcus pyogenes serotype M18 (strain MGAS8232) protein is ATP-dependent helicase/nuclease subunit A.